A 409-amino-acid chain; its full sequence is Carbamoyl phosphate synthase arginine-specific small chain (409 aa).

One can recognise a Glutamine amidotransferase type-1 domain in the interval 197–389 (NVALIDCGVK…FDNMSQYRAL (193 aa)). The active-site Nucleophile is cysteine 277. Active-site residues include histidine 362 and glutamate 364.

This sequence belongs to the CarA family. As to quaternary structure, heterodimer composed of 2 chains; the small (or glutamine) chain promotes the hydrolysis of glutamine to ammonia, which is used by the large (or ammonia) chain to synthesize carbamoyl phosphate.

The protein resides in the cytoplasm. It carries out the reaction hydrogencarbonate + L-glutamine + 2 ATP + H2O = carbamoyl phosphate + L-glutamate + 2 ADP + phosphate + 2 H(+). The catalysed reaction is L-glutamine + H2O = L-glutamate + NH4(+). It functions in the pathway amino-acid biosynthesis; L-arginine biosynthesis; carbamoyl phosphate from bicarbonate: step 1/1. Small subunit of the arginine-specific carbamoyl phosphate synthase (CPSase). CPSase catalyzes the formation of carbamoyl phosphate from the ammonia moiety of glutamine, carbonate, and phosphate donated by ATP, constituting the first step of 2 biosynthetic pathways, one leading to arginine and/or urea and the other to pyrimidine nucleotides. The small subunit (glutamine amidotransferase) binds and cleaves glutamine to supply the large subunit with the substrate ammonia. The protein is Carbamoyl phosphate synthase arginine-specific small chain (CPA1) of Kluyveromyces lactis (strain ATCC 8585 / CBS 2359 / DSM 70799 / NBRC 1267 / NRRL Y-1140 / WM37) (Yeast).